Here is a 203-residue protein sequence, read N- to C-terminus: Urease accessory protein UreG (203 aa).

Gly-14–Thr-21 provides a ligand contact to GTP.

Belongs to the SIMIBI class G3E GTPase family. UreG subfamily. In terms of assembly, homodimer. UreD, UreF and UreG form a complex that acts as a GTP-hydrolysis-dependent molecular chaperone, activating the urease apoprotein by helping to assemble the nickel containing metallocenter of UreC. The UreE protein probably delivers the nickel.

It is found in the cytoplasm. Facilitates the functional incorporation of the urease nickel metallocenter. This process requires GTP hydrolysis, probably effectuated by UreG. This chain is Urease accessory protein UreG, found in Allorhizobium ampelinum (strain ATCC BAA-846 / DSM 112012 / S4) (Agrobacterium vitis (strain S4)).